Consider the following 554-residue polypeptide: Putative F-box/LRR-repeat protein 8 (554 aa).

Residues 71 to 117 (YDYISNLPDECLSLIFQSLTCADLKRCSLVCRRWLTIEGQCRHRLSL) form the F-box domain. LRR repeat units lie at residues 119–144 (AQSDLISVIPSLFTRFDSVTKLVLRS), 148–173 (SLGICDNAFVMISVRCRNLTRLKLRG), 174–199 (CPEISDLGIIGFTENCRSLKKVSFGS), 205–224 (KGMNALLNTCLGLEELSVKR), 250–275 (KELHNGQCFAPLLSGAKGLRILKIFR), 301–325 (RIQMSDLGLTALSKCSGVEVLHLVK), 326–351 (TPDCTNVGLALVAERCKLLRKLHIDG), 354–379 (TNRIGDEGLIVVAKYCWNLQELVLIG), 383–404 (TKLSLEAIVSNCLNLERLALCG), 405–428 (SDTVGDTELCCIAEKCLALRKLCI), 430–455 (NCPITDDGIKALGNGCPNLLKVKVKK), and 456–480 (CRGVTTQGADLLRKRRALLVVNLDA).

The sequence is that of Putative F-box/LRR-repeat protein 8 (FBL8) from Arabidopsis thaliana (Mouse-ear cress).